Consider the following 330-residue polypeptide: DNA-directed RNA polymerase subunit alpha (330 aa).

The interval 1–237 is alpha N-terminal domain (alpha-NTD); the sequence is MYTEINEMLT…RQLHAFVDMK (237 aa). The alpha C-terminal domain (alpha-CTD) stretch occupies residues 251-330; that stretch reads FDPVLLRSVD…ENWPPASLGE (80 aa).

The protein belongs to the RNA polymerase alpha chain family. In terms of assembly, homodimer. The RNAP catalytic core consists of 2 alpha, 1 beta, 1 beta' and 1 omega subunit. When a sigma factor is associated with the core the holoenzyme is formed, which can initiate transcription.

The enzyme catalyses RNA(n) + a ribonucleoside 5'-triphosphate = RNA(n+1) + diphosphate. In terms of biological role, DNA-dependent RNA polymerase catalyzes the transcription of DNA into RNA using the four ribonucleoside triphosphates as substrates. The sequence is that of DNA-directed RNA polymerase subunit alpha from Legionella pneumophila subsp. pneumophila (strain Philadelphia 1 / ATCC 33152 / DSM 7513).